Here is a 305-residue protein sequence, read N- to C-terminus: Ribosomal RNA large subunit methyltransferase F (305 aa).

Belongs to the methyltransferase superfamily. METTL16/RlmF family.

It localises to the cytoplasm. It catalyses the reaction adenosine(1618) in 23S rRNA + S-adenosyl-L-methionine = N(6)-methyladenosine(1618) in 23S rRNA + S-adenosyl-L-homocysteine + H(+). Its function is as follows. Specifically methylates the adenine in position 1618 of 23S rRNA. This chain is Ribosomal RNA large subunit methyltransferase F, found in Bacteroides fragilis (strain YCH46).